Reading from the N-terminus, the 218-residue chain is Insulin-induced gene 2 protein (218 aa).

Over 1-21 the chain is Cytoplasmic; the sequence is MGDRENVSYGSRPILAQKMNL. Residues 22–44 traverse the membrane as a helical segment; it reads LLRGFLLFLIGVFLALVLNLLQV. At 45-63 the chain is on the lumenal side; it reads QRNVTLFPPDVLSSLFSSA. Residues 64–81 traverse the membrane as a helical segment; sequence WWVPLCCGTAAAAIGLLY. Over 82–96 the chain is Cytoplasmic; that stretch reads PCIDRHLGEPHKFKR. A helical membrane pass occupies residues 97–119; it reads EWSSVMRCVAVFVGINHASAKVD. Residues 120–122 lie on the Lumenal side of the membrane; sequence FAN. Residues 123–141 traverse the membrane as a helical segment; it reads NMQLSLTLAALSIGLWWTF. Residues 142 to 146 lie on the Cytoplasmic side of the membrane; the sequence is DRSRS. Residues 147 to 168 traverse the membrane as a helical segment; that stretch reads GLGLGIGISFFATLVSQLLVYN. The Lumenal segment spans residues 169-182; it reads GVYEYTAPDFLYVR. A helical membrane pass occupies residues 183–200; that stretch reads SWLPCIFFAGGITMGNIG. The Cytoplasmic portion of the chain corresponds to 201–218; the sequence is RQLEMYERKALVEKSHRD. Positions 212–218 match the KxHxx motif; sequence VEKSHRD.

It belongs to the INSIG family. Interacts with scap; interaction is direct and only takes place in the presence of sterols; it prevents interaction between scap and the coat protein complex II (COPII). Associates with the SCAP-SREBP complex; association is mediated via its interaction with scap and only takes place in the presence of sterols.

It is found in the endoplasmic reticulum membrane. Oxysterol-binding protein that mediates feedback control of cholesterol synthesis by controlling both endoplasmic reticulum to Golgi transport of scap and degradation of hmgcr. Acts as a negative regulator of cholesterol biosynthesis by mediating the retention of the SCAP-SREBP complex in the endoplasmic reticulum, thereby blocking the processing of sterol regulatory element-binding proteins (SREBPs). Binds oxysterol, including 22-hydroxycholesterol, 24-hydroxycholesterol, 25-hydroxycholesterol and 27-hydroxycholesterol, regulating interaction with scap and retention of the SCAP-SREBP complex in the endoplasmic reticulum. In presence of oxysterol, interacts with scap, retaining the SCAP-SREBP complex in the endoplasmic reticulum, thereby preventing scap from escorting SREBPs to the Golgi. Sterol deprivation reduce oxysterol-binding, disrupting the interaction between insig2 and scap, thereby promoting Golgi transport of the SCAP-SREBP complex, followed by processing and nuclear translocation of SREBPs. Also regulates cholesterol synthesis by regulating degradation of hmgcr. The chain is Insulin-induced gene 2 protein from Xenopus laevis (African clawed frog).